A 333-amino-acid chain; its full sequence is MSSSSPTSSGKPLKLRIDRDNEGYLSLVTDTGEVYRCPICGNDRFVYNYERGEIVCIVCGAVVQEQLLDLGPEWRAFTSEEKGQRARTGAPLTRLISEALTTVIDWRDKDVSGKELDIKRKLEVIRLRKWQTRARVQTSYERNFIQAAQELERLRSSMGVPRPCVEQALEIYRQALEKELVRGRSVEAMAAAALYMACRMMKMPRPLDELVRYTKASRREVARCYRLLLRELNVKVPISDPVLYISRIAEQLKLSGEVVKTAIEILQKAKKAGITAGKDPAGLAAAAVYIASLLHGDNRTQKDFAVAAGVTEVTVRNRYKELAKTLNIKVPVK.

The TFIIB-type zinc-finger motif lies at 33-64 (EVYRCPICGNDRFVYNYERGEIVCIVCGAVVQ). Zn(2+) is bound by residues Cys37, Cys40, Cys56, and Cys59. Tandem repeats lie at residues 149 to 232 (QELE…LREL) and 243 to 324 (LYIS…ELAK).

This sequence belongs to the TFIIB family.

Functionally, stabilizes TBP binding to an archaeal box-A promoter. Also responsible for recruiting RNA polymerase II to the pre-initiation complex (DNA-TBP-TFIIB). In Pyrobaculum islandicum (strain DSM 4184 / JCM 9189 / GEO3), this protein is Transcription initiation factor IIB.